The sequence spans 204 residues: Pro-glucagon (204 aa).

A signal peptide spans 1–20 (MTSMYFVAGLLLMIVQGSWQ). Residues 84–109 (SGQQGVEEREKENLLDQLSSNGLARH) constitute a propeptide that is removed on maturation. R145 carries the post-translational modification Arginine amide. 2 propeptides span residues 149–161 (DFLE…DDIG) and 197–204 (RDLLGEYQ).

This sequence belongs to the glucagon family. As to expression, isoform LPII is expressed in both pancreas and intestine. Expression of isoform LPI is restricted to the pancreas. Neither isoform is detected in salivary glands.

It localises to the secreted. In terms of biological role, plays a key role in glucose metabolism and homeostasis. Regulates blood glucose by increasing gluconeogenesis and decreasing glycolysis. Functionally, potent stimulator of glucose-dependent insulin release. Plays important roles on gastric motility and the suppression of plasma glucagon levels. Its function is as follows. Stimulates intestinal growth and up-regulates villus height in the small intestine, concomitant with increased crypt cell proliferation and decreased enterocyte apoptosis. The polypeptide is Pro-glucagon (GCG) (Heloderma suspectum (Gila monster)).